The chain runs to 764 residues: PFL-like enzyme TdcE (764 aa).

A PFL domain is found at 7 to 629 (TSDKLYADAW…KTGNTPDGRR (623 aa)). Catalysis depends on Cys423, which acts as the S-acetylcysteine intermediate. The active-site Cysteine radical intermediate is the Cys424. A disordered region spans residues 622–645 (GNTPDGRRAGTPFAPGANPMHGRD). In terms of domain architecture, Glycine radical spans 636–764 (PGANPMHGRD…VISRTFTQAL (129 aa)). Gly739 is subject to Glycine radical.

The protein belongs to the glycyl radical enzyme (GRE) family. PFL subfamily.

It is found in the cytoplasm. The catalysed reaction is 2-oxobutanoate + CoA = propanoyl-CoA + formate. It catalyses the reaction formate + acetyl-CoA = pyruvate + CoA. The protein operates within amino-acid degradation; L-threonine degradation via propanoate pathway; propanoate from L-threonine: step 2/4. With respect to regulation, dependent on PFL-activase. In terms of biological role, catalyzes the cleavage of 2-ketobutyrate to propionyl-CoA and formate. It can also use pyruvate as substrate. The sequence is that of PFL-like enzyme TdcE (tdcE) from Escherichia coli (strain K12).